We begin with the raw amino-acid sequence, 236 residues long: tRNA (guanine-N(7)-)-methyltransferase (236 aa).

Residues glycine 54, 77 to 78, 110 to 111, and leucine 130 contribute to the S-adenosyl-L-methionine site; these read EI and NA. Aspartate 133 is a catalytic residue. 208–210 is a binding site for S-adenosyl-L-methionine; it reads TEE.

This sequence belongs to the class I-like SAM-binding methyltransferase superfamily. TrmB family.

The protein localises to the nucleus. It catalyses the reaction guanosine(46) in tRNA + S-adenosyl-L-methionine = N(7)-methylguanosine(46) in tRNA + S-adenosyl-L-homocysteine. Its pathway is tRNA modification; N(7)-methylguanine-tRNA biosynthesis. Functionally, catalyzes the formation of N(7)-methylguanine at position 46 (m7G46) in tRNA. In Bombyx mori (Silk moth), this protein is tRNA (guanine-N(7)-)-methyltransferase.